A 413-amino-acid chain; its full sequence is Argininosuccinate synthase (413 aa).

8 to 16 (AYSGGLDTS) contacts ATP. Residue Tyr-87 coordinates L-citrulline. Position 117 (Gly-117) interacts with ATP. Residues Thr-119, Asn-123, and Asp-124 each coordinate L-aspartate. Position 123 (Asn-123) interacts with L-citrulline. The L-citrulline site is built by Arg-127, Ser-175, Glu-259, and Tyr-271.

The protein belongs to the argininosuccinate synthase family. Type 1 subfamily. As to quaternary structure, homotetramer.

Its subcellular location is the cytoplasm. It carries out the reaction L-citrulline + L-aspartate + ATP = 2-(N(omega)-L-arginino)succinate + AMP + diphosphate + H(+). Its pathway is amino-acid biosynthesis; L-arginine biosynthesis; L-arginine from L-ornithine and carbamoyl phosphate: step 2/3. The polypeptide is Argininosuccinate synthase (Micrococcus luteus (strain ATCC 4698 / DSM 20030 / JCM 1464 / CCM 169 / CCUG 5858 / IAM 1056 / NBRC 3333 / NCIMB 9278 / NCTC 2665 / VKM Ac-2230) (Micrococcus lysodeikticus)).